The primary structure comprises 1339 residues: Aldehyde oxidase 1 (1339 aa).

Residues 5-92 form the 2Fe-2S ferredoxin-type domain; sequence SELLFYVNGR…GAAVTTVEGI (88 aa). Residues Cys44, Cys49, Cys52, and Cys74 each contribute to the [2Fe-2S] cluster site. Mo-molybdopterin is bound at residue Gln113. 4 residues coordinate [2Fe-2S] cluster: Cys114, Cys117, Cys149, and Cys151. Position 151 (Cys151) interacts with Mo-molybdopterin. In terms of domain architecture, FAD-binding PCMH-type spans 236 to 421; that stretch reads FGSDRMTWIS…ISVNIPYSRK (186 aa). Residues 264-271, Ala345, Ser354, His358, Asp367, and Leu411 each bind FAD; that span reads VVMGNTSV. Mo-molybdopterin-binding positions include 807 to 808 and Met1048; that span reads AF. Ser1069 is modified (phosphoserine). Mo-molybdopterin is bound by residues 1089–1092, Gln1204, and Leu1269; that span reads GSVV. Catalysis depends on Glu1271, which acts as the Proton acceptor; for azaheterocycle hydroxylase activity.

Belongs to the xanthine dehydrogenase family. In terms of assembly, homodimer. The cofactor is [2Fe-2S] cluster. Requires FAD as cofactor. Mo-molybdopterin serves as cofactor. Post-translationally, the N-terminus is blocked. Expressed at high levels in liver, lung and spleen. Also expressed in kindey, eye, testis, duodenum, esophagus and thymus (at protein level).

It is found in the cytoplasm. It catalyses the reaction an aldehyde + O2 + H2O = a carboxylate + H2O2 + H(+). It carries out the reaction retinal + O2 + H2O = retinoate + H2O2 + H(+). Functionally, oxidase with broad substrate specificity, oxidizing aromatic azaheterocycles, such as N1-methylnicotinamide, N-methylphthalazinium and phthalazine, as well as aldehydes, such as benzaldehyde, retinal, pyridoxal, and vanillin. Plays a key role in the metabolism of xenobiotics and drugs containing aromatic azaheterocyclic substituents. Is probably involved in the regulation of reactive oxygen species homeostasis. May be a prominent source of superoxide generation via the one-electron reduction of molecular oxygen. May also catalyze nitric oxide (NO) production via the reduction of nitrite to NO with NADH or aldehyde as electron donor. May play a role in adipogenesis. The chain is Aldehyde oxidase 1 from Bos taurus (Bovine).